A 455-amino-acid chain; its full sequence is tRNA modification GTPase MnmE (455 aa).

Position 22 (R22) interacts with (6S)-5-formyl-5,6,7,8-tetrahydrofolate. The tract at residues 43 to 67 is disordered; it reads RRATRAALRSPPSGPGPTGPGPEEG. (6S)-5-formyl-5,6,7,8-tetrahydrofolate is bound by residues E92 and R132. The TrmE-type G domain occupies 228-381; the sequence is GLQVAVVGAP…LEAALESRAR (154 aa). N238 is a binding site for K(+). Residues 238–243, 257–263, and 282–285 each bind GTP; these read NVGKSS, SDIAGTT, and DTAG. Mg(2+) is bound at residue S242. The K(+) site is built by S257, I259, and T262. T263 is a binding site for Mg(2+). Residue K455 participates in (6S)-5-formyl-5,6,7,8-tetrahydrofolate binding.

Belongs to the TRAFAC class TrmE-Era-EngA-EngB-Septin-like GTPase superfamily. TrmE GTPase family. As to quaternary structure, homodimer. Heterotetramer of two MnmE and two MnmG subunits. The cofactor is K(+).

The protein localises to the cytoplasm. In terms of biological role, exhibits a very high intrinsic GTPase hydrolysis rate. Involved in the addition of a carboxymethylaminomethyl (cmnm) group at the wobble position (U34) of certain tRNAs, forming tRNA-cmnm(5)s(2)U34. The chain is tRNA modification GTPase MnmE from Rhodospirillum rubrum (strain ATCC 11170 / ATH 1.1.1 / DSM 467 / LMG 4362 / NCIMB 8255 / S1).